An 860-amino-acid chain; its full sequence is Gag-Pro polyprotein (860 aa).

A lipid anchor (N-myristoyl glycine; by host) is attached at Gly2. 2 stretches are compositionally biased toward basic and acidic residues: residues 154-169 (PYEE…EKDH) and 178-193 (QRKE…KDQK). The tract at residues 154-193 (PYEEKEKADKNEEKDHVRKVKKIVQRKENSEHKRKEKDQK) is disordered. Residues 305–308 (PSAP) carry the PTAP/PSAP motif motif. 2 CCHC-type zinc fingers span residues 525–542 (PVCF…DCKE) and 552–569 (GLCP…ECKS). The tract at residues 572–631 (DKDGNPLPPLETNAENSKNLVKGQSPSPTQKGDKGKDSGLNPEAPPFTIHDLPRGTPGSA) is disordered. Over residues 584–601 (NAENSKNLVKGQSPSPTQ) the composition is skewed to polar residues. In terms of domain architecture, Peptidase A2 spans 766-841 (FLGLLDTGAD…LPFTLWGRDI (76 aa)). The active-site Protease; shared with dimeric partner is Asp771.

In terms of assembly, homodimer; when myristoylated. As to quaternary structure, homodimer. NC-dUTPase is a homotrimer. The cofactor is Mg(2+). Released by autocatalytic processing. In terms of processing, myristoylated. Myristoylation of the matrix (MA) domain mediates the transport and binding of Gag polyproteins to the host plasma membrane and is required for the assembly of viral particles. Post-translationally, specific enzymatic cleavages in vivo yield mature proteins.

The protein resides in the virion. It catalyses the reaction dUTP + H2O = dUMP + diphosphate + H(+). Its activity is regulated as follows. Inhibited by pepstatin A. Its function is as follows. Matrix protein. In terms of biological role, nucleocapsid protein p14: Binds strongly to viral nucleic acids and promote their aggregation. Also destabilizes the nucleic acids duplexes via highly structured zinc-binding motifs. Functionally, capsid protein. NC-dUTPase has dUTPase activity, thereby preventing incorporation of uracil into DNA. Its function is as follows. The aspartyl protease mediates proteolytic cleavages of Gag and Gag-Pol polyproteins during or shortly after the release of the virion from the plasma membrane. Cleavages take place as an ordered, step-wise cascade to yield mature proteins. This process is called maturation. Displays maximal activity during the budding process just prior to particle release from the cell. The sequence is that of Gag-Pro polyprotein (gag-pro) from Mus musculus (Mouse).